A 362-amino-acid chain; its full sequence is UPF0283 membrane protein Arad_2632 (362 aa).

The span at 1-11 shows a compositional bias: basic and acidic residues; sequence MTKPTEDDPKG. Positions 1 to 47 are disordered; sequence MTKPTEDDPKGISRRPAAFSLEQEASREGAHTKTTAETPRRKPQSFD. Transmembrane regions (helical) follow at residues 82–102 and 118–138; these read FSFGKVALSAFGILVSLAFGL and LGYTALTVLAIGILAVLAIVV.

This sequence belongs to the UPF0283 family.

The protein resides in the cell inner membrane. In Rhizobium rhizogenes (strain K84 / ATCC BAA-868) (Agrobacterium radiobacter), this protein is UPF0283 membrane protein Arad_2632.